Reading from the N-terminus, the 293-residue chain is uncharacterized protein (293 aa).

Disordered regions lie at residues 20 to 148 and 226 to 283; these read ELHS…NNNT and RENQ…GNKN. Composition is skewed to acidic residues over residues 37 to 47, 56 to 91, and 99 to 112; these read LEDDEEYDDDQ, EEFD…DDEM, and NIDD…EEEQ. Composition is skewed to low complexity over residues 117 to 148 and 232 to 283; these read TNNN…NNNT and NSNS…GNKN.

This is an uncharacterized protein from Dictyostelium discoideum (Social amoeba).